Consider the following 397-residue polypeptide: Lysophospholipid transporter LplT (397 aa).

11 helical membrane-spanning segments follow: residues 16–36 (MMAV…LLFA), 53–73 (VLQM…GQVA), 91–111 (LGAV…LVGV), 139–159 (LMES…GMLA), 164–184 (GAAL…NLLI), 229–249 (WGAG…ALGI), 257–277 (YLNA…AKLV), 282–302 (VSRC…FSLQ), 304–324 (AALP…FFVV), 344–364 (IAVQ…LYSL), and 372–392 (VVGI…GLWL).

This sequence belongs to the major facilitator superfamily. LplT (TC 2.A.1.42) family.

The protein localises to the cell inner membrane. Its function is as follows. Catalyzes the facilitated diffusion of 2-acyl-glycero-3-phosphoethanolamine (2-acyl-GPE) into the cell. This chain is Lysophospholipid transporter LplT, found in Cronobacter sakazakii (strain ATCC BAA-894) (Enterobacter sakazakii).